The following is a 260-amino-acid chain: Acetylglutamate kinase (260 aa).

Residues 45 to 46 (GG), R67, and N159 contribute to the substrate site.

This sequence belongs to the acetylglutamate kinase family. ArgB subfamily.

The protein localises to the cytoplasm. The catalysed reaction is N-acetyl-L-glutamate + ATP = N-acetyl-L-glutamyl 5-phosphate + ADP. It participates in amino-acid biosynthesis; L-arginine biosynthesis; N(2)-acetyl-L-ornithine from L-glutamate: step 2/4. Functionally, catalyzes the ATP-dependent phosphorylation of N-acetyl-L-glutamate. This Aliivibrio fischeri (strain ATCC 700601 / ES114) (Vibrio fischeri) protein is Acetylglutamate kinase.